A 389-amino-acid polypeptide reads, in one-letter code: 5-hydroxytryptamine receptor 1B (389 aa).

Residues 1–45 (MGNPEASCTPPAVLGSQTGLPHANVSAPPNNCSAPSHIYQDSIAL) are Extracellular-facing. N-linked (GlcNAc...) asparagine glycans are attached at residues Asn24 and Asn31. The chain crosses the membrane as a helical span at residues 46–71 (PWKVLLVVLLALITLATTLSNAFVIA). Residues 72–85 (TVYRTRKLHTPANY) are Cytoplasmic-facing. Residues 86 to 110 (LIASLAFTDLLVSILVMPISTMYTV) form a helical membrane-spanning segment. The Extracellular segment spans residues 111–118 (TGRWTLGQ). The helical transmembrane segment at 119-144 (ALCDFWLSSDITCCTASIMHLCVIAL) threads the bilayer. Cysteines 121 and 198 form a disulfide. Positions 128 and 133 each coordinate ergotamine. Positions 145-147 (DRY) match the DRY motif; important for ligand-induced conformation changes and signaling motif. At 145-164 (DRYWAITDAVGYSAKRTPRR) the chain is on the cytoplasmic side. A helical membrane pass occupies residues 165-183 (AAGMIALVWVFSICISLPP). Topologically, residues 184–204 (FFWRQAKAEEEVLDCLVNTDH) are extracellular. An ergotamine-binding site is contributed by Val200. Residues 205-228 (VLYTVYSTGGAFYLPTLLLIALYG) form a helical membrane-spanning segment. The Cytoplasmic portion of the chain corresponds to 229–314 (RIYVEARSRI…AARERKATKT (86 aa)). A helical membrane pass occupies residues 315–336 (LGVILGAFIVCWLPFFIISLVM). Residues 337 to 346 (PICKDACWFH) lie on the Extracellular side of the membrane. The helical transmembrane segment at 347-369 (MAIFDFFTWLGYLNSLINPIIYT) threads the bilayer. The short motif at 364 to 368 (NPIIY) is the NPxxY motif; important for ligand-induced conformation changes and signaling element. The Cytoplasmic portion of the chain corresponds to 370-389 (MSNEDFKQAFHKLIRFKCTT). Cys387 carries S-palmitoyl cysteine lipidation.

This sequence belongs to the G-protein coupled receptor 1 family. As to quaternary structure, homodimer. Heterodimer with HTR1D. Phosphorylated. Desensitization of the receptor may be mediated by its phosphorylation. Post-translationally, palmitoylated.

Its subcellular location is the cell membrane. Its function is as follows. G-protein coupled receptor for 5-hydroxytryptamine (serotonin). Also functions as a receptor for ergot alkaloid derivatives, various anxiolytic and antidepressant drugs and other psychoactive substances, such as lysergic acid diethylamide (LSD). Ligand binding causes a conformation change that triggers signaling via guanine nucleotide-binding proteins (G proteins) and modulates the activity of downstream effectors, such as adenylate cyclase. HTR1B is coupled to G(i)/G(o) G alpha proteins and mediates inhibitory neurotransmission by inhibiting adenylate cyclase activity. Arrestin family members inhibit signaling via G proteins and mediate activation of alternative signaling pathways. Regulates the release of 5-hydroxytryptamine, dopamine and acetylcholine in the brain, and thereby affects neural activity, nociceptive processing, pain perception, mood and behavior. Besides, plays a role in vasoconstriction of cerebral arteries. The protein is 5-hydroxytryptamine receptor 1B (HTR1B) of Cavia porcellus (Guinea pig).